A 90-amino-acid polypeptide reads, in one-letter code: Small ribosomal subunit protein bS16 (90 aa).

The protein belongs to the bacterial ribosomal protein bS16 family.

This chain is Small ribosomal subunit protein bS16, found in Streptococcus sanguinis (strain SK36).